The following is a 113-amino-acid chain: Hydrogenase maturation factor HypA (113 aa).

Histidine 2 contacts Ni(2+). Zn(2+) contacts are provided by cysteine 73, cysteine 76, cysteine 89, and cysteine 92.

It belongs to the HypA/HybF family.

Functionally, involved in the maturation of [NiFe] hydrogenases. Required for nickel insertion into the metal center of the hydrogenase. This chain is Hydrogenase maturation factor HypA, found in Rhodobacter capsulatus (Rhodopseudomonas capsulata).